An 81-amino-acid polypeptide reads, in one-letter code: Carboxysome shell vertex protein CsoS4B (81 aa).

The 77-residue stretch at 1-77 (MEVMRVRSDL…TDLTIGGIID (77 aa)) folds into the BMV domain.

Belongs to the CcmL/EutN family. CsoS4 subfamily. In terms of assembly, homopentamer.

It is found in the carboxysome. Functionally, probably forms vertices in the carboxysome. Has been modeled to induce curvature upon insertion into an otherwise flat hexagonal layer of major carboxysome subunits. A minor shell protein, only 12 pentamers of CsoS4A/CsoS4B are calculated to be present in each carboxysome. The 2 CsoS4 proteins contribute to the impermeability of the carboxysome to CO(2). Its central pore is probably too small to allow passage of metabolites; its function might be to anchor different proteins or metabolites to the carboxysome. Its function is as follows. Unlike beta-carboxysomes, alpha-carboxysomes (Cb) can form without cargo protein. CsoS2 is essential for Cb formation and is also capable of targeting foreign proteins to the Cb. The Cb shell assembles with the aid of CsoS2; CsoS1A, CsoS1B and CsoS1C form the majority of the shell while CsoS4A and CsoS4B form vertices. CsoS1D forms pseudohexamers that probably control metabolite flux into and out of the shell. This is Carboxysome shell vertex protein CsoS4B from Halothiobacillus neapolitanus (strain ATCC 23641 / c2) (Thiobacillus neapolitanus).